A 272-amino-acid polypeptide reads, in one-letter code: Oligodendrocyte transcription factor 3 (272 aa).

The segment covering 1–14 (MNSDSSSVSSRASS) has biased composition (low complexity). The disordered stretch occupies residues 1–71 (MNSDSSSVSS…KAAGESSKYK (71 aa)). A compositionally biased stretch (basic residues) spans 24–33 (DHHHRHHHHQ). Residues 36-46 (RLNSVSSTQGD) are compositionally biased toward polar residues. Residues 68–89 (SKYKIKKQLSEQDLQQLRLKIN) are a coiled coil. Positions 83–137 (QLRLKINGRERKRMHDLNLAMDGLREVMPYAHGPSVRKLSKIATLLLARNYILML) constitute a bHLH domain.

It is found in the nucleus. In terms of biological role, may determine the distinct specification program of class A neurons in the dorsal part of the spinal cord and suppress specification of class B neurons. This is Oligodendrocyte transcription factor 3 (OLIG3) from Homo sapiens (Human).